The primary structure comprises 1692 residues: Flagellar attachment zone protein 1 (1692 aa).

Coiled coils occupy residues 613-657, 684-864, and 903-1607; these read REQE…KLQK, VTLD…HKVR, and NDHM…SALE. Tandem repeats lie at residues 1012–1025, 1026–1039, 1040–1053, 1054–1067, 1068–1081, 1082–1095, 1096–1109, 1110–1123, 1124–1137, 1138–1151, 1152–1165, 1166–1179, 1180–1193, 1194–1207, 1208–1221, 1222–1235, 1236–1249, 1250–1263, 1264–1277, 1278–1291, 1292–1305, 1306–1319, 1320–1333, 1334–1347, 1348–1361, 1362–1375, 1376–1389, 1390–1403, 1404–1417, 1418–1431, 1432–1445, 1446–1459, 1460–1473, 1474–1487, 1488–1501, 1502–1515, and 1516–1529. The segment at 1012-1529 is 37 X 14 AA tandem repeats of E-E-L-E-L-K-[VA]-A-E-N-E-K-L-A; sequence EELELKAAEN…LKVAENKRLA (518 aa).

It is found in the cell projection. Its subcellular location is the cilium. The protein resides in the flagellum. Its function is as follows. A component of FAZ filament that is required for correct FAZ assembly and attachment. Not essential for new flagellum growth. The sequence is that of Flagellar attachment zone protein 1 from Trypanosoma brucei brucei (strain 927/4 GUTat10.1).